A 411-amino-acid chain; its full sequence is MRFIEEFINKGYFHQCTDLDRLTAITKETKIAAYIGFDCTATSLHIGSLMQIMILRLLQQHGHKPIVIIGGGTSKIGDPTWKDEVRKILSKEDIAKNAEGIKKSLSKFIKFGDGKSDAIMLDNAEWLDSFNYLDFLRDFGSYFSVNRMLTMDSVKLRLEREQHLSFLEFNYMLLQAYDFYYLSKHYNCSLQLGGSDQWGNIVMGADLIRKISGKEVFGMTTPLLTTSSGAKMGKTAAGAVWLNEDLLSPYDYYQYWRNCEDADIVRFAKLYSEFTQEELNRFEILAAEDINAAKKQLAYELTKLCHSEQAAKSALETAVKIFEEGQIDENLPTVVLEQEVLQAGISAYELFHEAGLATSKSEARKLIRGNGAKINDRLVEDENMIINTNFLLDKNVIKLSAGKKRHILVRV.

Tyr-34 serves as a coordination point for L-tyrosine. Residues 39-48 carry the 'HIGH' region motif; the sequence is CTATSLHIGS. 2 residues coordinate L-tyrosine: Tyr-171 and Gln-175. The short motif at 231 to 235 is the 'KMSKS' region element; the sequence is KMGKT. Lys-234 serves as a coordination point for ATP. Residues 345–411 form the S4 RNA-binding domain; it reads ISAYELFHEA…GKKRHILVRV (67 aa).

It belongs to the class-I aminoacyl-tRNA synthetase family. TyrS type 1 subfamily. As to quaternary structure, homodimer.

The protein localises to the cytoplasm. It carries out the reaction tRNA(Tyr) + L-tyrosine + ATP = L-tyrosyl-tRNA(Tyr) + AMP + diphosphate + H(+). Its function is as follows. Catalyzes the attachment of tyrosine to tRNA(Tyr) in a two-step reaction: tyrosine is first activated by ATP to form Tyr-AMP and then transferred to the acceptor end of tRNA(Tyr). This Rickettsia massiliae (strain Mtu5) protein is Tyrosine--tRNA ligase.